Reading from the N-terminus, the 268-residue chain is Nitrite transporter NirC (268 aa).

At Met1 to Leu25 the chain is on the cytoplasmic side. Residues Gly26–Phe46 form a helical membrane-spanning segment. Over Thr47–Leu59 the chain is Periplasmic. The helical transmembrane segment at Val60–Phe80 threads the bilayer. Over Thr81–Asn112 the chain is Cytoplasmic. Residues Leu113–Val133 form a helical membrane-spanning segment. At Asp134 to Met151 the chain is on the periplasmic side. Residues Val152 to Leu172 traverse the membrane as a helical segment. Over Arg173 to Lys179 the chain is Cytoplasmic. A helical membrane pass occupies residues Phe180–Ala200. Topologically, residues Asn201–Asn225 are periplasmic. A helical membrane pass occupies residues Leu226 to Trp246. The Cytoplasmic segment spans residues Tyr247–Gly268.

It belongs to the FNT transporter (TC 1.A.16) family.

It localises to the cell inner membrane. Its function is as follows. Catalyzes nitrite uptake and nitrite export across the cytoplasmic membrane. Is up to 10-fold more active than NarK or NarU in nitrite uptake for subsequent reduction in the cytoplasm by the NirB/NirD nitrite reductase. This is Nitrite transporter NirC (nirC) from Escherichia coli (strain K12).